Consider the following 132-residue polypeptide: Small ribosomal subunit protein uS8 (132 aa).

The protein belongs to the universal ribosomal protein uS8 family. In terms of assembly, part of the 30S ribosomal subunit. Contacts proteins S5 and S12.

One of the primary rRNA binding proteins, it binds directly to 16S rRNA central domain where it helps coordinate assembly of the platform of the 30S subunit. The protein is Small ribosomal subunit protein uS8 of Clostridium acetobutylicum (strain ATCC 824 / DSM 792 / JCM 1419 / IAM 19013 / LMG 5710 / NBRC 13948 / NRRL B-527 / VKM B-1787 / 2291 / W).